A 301-amino-acid chain; its full sequence is Prohibitin-2 (301 aa).

Necessary for transcriptional repression stretches follow at residues 19 to 49 (MGTA…GHRA) and 150 to 174 (ASQL…RAKD). A coiled-coil region spans residues 191–237 (REYTAAVESKQVAQQEAQRAQFLVEKAKQDQKQKIVQAEGEAAAAKM).

Belongs to the prohibitin family. The mitochondrial prohibitin complex consists of two subunits (PHB1 and PHB2), assembled into a membrane-associated ring-shaped supercomplex of approximately 1 mDa.

Its subcellular location is the mitochondrion inner membrane. The protein resides in the cytoplasm. It is found in the nucleus. It localises to the cell membrane. Its function is as follows. Protein with pleiotropic attributes mediated in a cell-compartment- and tissue-specific manner, which include the plasma membrane-associated cell signaling functions, mitochondrial chaperone, and transcriptional co-regulator of transcription factors and sex steroid hormones in the nucleus. In the mitochondria, together with PHB, forms large ring complexes (prohibitin complexes) in the inner mitochondrial membrane (IMM) and functions as a chaperone protein that stabilizes mitochondrial respiratory enzymes and maintains mitochondrial integrity in the IMM, which is required for mitochondrial morphogenesis, neuronal survival, and normal lifespan. In terms of biological role, in the nucleus, serves as transcriptional co-regulator. This is Prohibitin-2 (phb2) from Xenopus tropicalis (Western clawed frog).